We begin with the raw amino-acid sequence, 94 residues long: Aspartyl/glutamyl-tRNA(Asn/Gln) amidotransferase subunit C (94 aa).

Belongs to the GatC family. Heterotrimer of A, B and C subunits.

The enzyme catalyses L-glutamyl-tRNA(Gln) + L-glutamine + ATP + H2O = L-glutaminyl-tRNA(Gln) + L-glutamate + ADP + phosphate + H(+). The catalysed reaction is L-aspartyl-tRNA(Asn) + L-glutamine + ATP + H2O = L-asparaginyl-tRNA(Asn) + L-glutamate + ADP + phosphate + 2 H(+). Its function is as follows. Allows the formation of correctly charged Asn-tRNA(Asn) or Gln-tRNA(Gln) through the transamidation of misacylated Asp-tRNA(Asn) or Glu-tRNA(Gln) in organisms which lack either or both of asparaginyl-tRNA or glutaminyl-tRNA synthetases. The reaction takes place in the presence of glutamine and ATP through an activated phospho-Asp-tRNA(Asn) or phospho-Glu-tRNA(Gln). This Desulfotalea psychrophila (strain LSv54 / DSM 12343) protein is Aspartyl/glutamyl-tRNA(Asn/Gln) amidotransferase subunit C.